We begin with the raw amino-acid sequence, 476 residues long: Angiotensinogen (476 aa).

The first 24 residues, 1 to 24 (MAPAGVSLRATILCLLAWAGLAAG), serve as a signal peptide directing secretion. Beta-decarboxylated aspartate; in form angiotensin-A is present on Asp-25. Asn-38, Asn-161, Asn-295, and Asn-319 each carry an N-linked (GlcNAc...) asparagine glycan. Cysteines 42 and 162 form a disulfide.

Belongs to the serpin family. During pregnancy, exists as a disulfide-linked 2:2 heterotetramer with the proform of PRG2 and as a complex (probably a 2:2:2 heterohexamer) with pro-PRG2 and C3dg. In terms of processing, beta-decarboxylation of Asp-25 in angiotensin-2, by mononuclear leukocytes produces alanine. The resulting peptide form, angiotensin-A, has the same affinity for the AT1 receptor as angiotensin-2, but a higher affinity for the AT2 receptor. Post-translationally, in response to low blood pressure, the enzyme renin/REN cleaves angiotensinogen to produce angiotensin-1. Angiotensin-1 is a substrate of ACE (angiotensin converting enzyme) that removes a dipeptide to yield the physiologically active peptide angiotensin-2. Angiotensin-1 and angiotensin-2 can be further processed to generate angiotensin-3, angiotensin-4. Angiotensin 1-9 is cleaved from angiotensin-1 by ACE2 and can be further processed by ACE to produce angiotensin 1-7, angiotensin 1-5 and angiotensin 1-4. Angiotensin 1-7 has also been proposed to be cleaved from angiotensin-2 by ACE2 or from angiotensin-1 by MME (neprilysin). The disulfide bond is labile. Angiotensinogen is present in the circulation in a near 40:60 ratio with the oxidized disulfide-bonded form, which preferentially interacts with receptor-bound renin. In terms of tissue distribution, expressed by the liver and secreted in plasma.

It localises to the secreted. Essential component of the renin-angiotensin system (RAS), a potent regulator of blood pressure, body fluid and electrolyte homeostasis. Functionally, acts directly on vascular smooth muscle as a potent vasoconstrictor, affects cardiac contractility and heart rate through its action on the sympathetic nervous system, and alters renal sodium and water absorption through its ability to stimulate the zona glomerulosa cells of the adrenal cortex to synthesize and secrete aldosterone. Acts by binding to angiotensin receptors AGTR1 and AGTR2. Also binds the DEAR/FBXW7-AS1 receptor. Its function is as follows. Stimulates aldosterone release. In terms of biological role, is a ligand for the G-protein coupled receptor MAS1. Has vasodilator and antidiuretic effects. Has an antithrombotic effect that involves MAS1-mediated release of nitric oxide from platelets. The sequence is that of Angiotensinogen from Homo sapiens (Human).